Reading from the N-terminus, the 78-residue chain is Large ribosomal subunit protein eL38 (78 aa).

It belongs to the eukaryotic ribosomal protein eL38 family.

This chain is Large ribosomal subunit protein eL38 (RpL38), found in Maconellicoccus hirsutus (Pink hibiscus mealybug).